A 477-amino-acid chain; its full sequence is 3-isopropylmalate dehydratase large subunit (477 aa).

Positions 347, 407, and 410 each coordinate [4Fe-4S] cluster. A disordered region spans residues 418–442 (LAPGERSASTSNRNFEGRQGKGGRT).

This sequence belongs to the aconitase/IPM isomerase family. LeuC type 1 subfamily. As to quaternary structure, heterodimer of LeuC and LeuD. Requires [4Fe-4S] cluster as cofactor.

The enzyme catalyses (2R,3S)-3-isopropylmalate = (2S)-2-isopropylmalate. It functions in the pathway amino-acid biosynthesis; L-leucine biosynthesis; L-leucine from 3-methyl-2-oxobutanoate: step 2/4. Its function is as follows. Catalyzes the isomerization between 2-isopropylmalate and 3-isopropylmalate, via the formation of 2-isopropylmaleate. This Streptomyces avermitilis (strain ATCC 31267 / DSM 46492 / JCM 5070 / NBRC 14893 / NCIMB 12804 / NRRL 8165 / MA-4680) protein is 3-isopropylmalate dehydratase large subunit.